Consider the following 219-residue polypeptide: Claudin-3 (219 aa).

The Cytoplasmic segment spans residues 1–8 (MSMGLEIT). Residues 9-29 (GTSLAVLGWLCTIVCCALPMW) traverse the membrane as a helical segment. At 30 to 80 (RVSAFIGSSIITAQITWEGLWMNCVVQSTGQMQCKMYDSLLALPQDLQAAR) the chain is on the extracellular side. Residues 81–101 (ALIVVSILLAAFGLLVALVGA) form a helical membrane-spanning segment. Residues 102–115 (QCTNCVQDETAKAK) are Cytoplasmic-facing. A helical transmembrane segment spans residues 116–136 (ITIVAGVLFLLAALLTLVPVS). The Extracellular portion of the chain corresponds to 137 to 159 (WSANTIIRDFYNPLVPEAQKREM). The helical transmembrane segment at 160–180 (GAGLYVGWAAAALQLLGGALL) threads the bilayer. Residues 181–219 (CCSCPPRDKYAPTKILYSAPRSTGPGTGTGTAYDRKDYV) are Cytoplasmic-facing. Tyrosine 197 carries the phosphotyrosine modification. A Phosphoserine modification is found at serine 198. Residues 218–219 (YV) are interactions with TJP1, TJP2 and TJP3.

This sequence belongs to the claudin family. As to quaternary structure, can form homo- and heteropolymers with other CLDN. Homopolymers interact with CLDN1 and CLDN2 homopolymers. Interacts in cis (within the same plasma membrane) with CLDN19. Directly interacts with TJP1/ZO-1, TJP2/ZO-2 and TJP3/ZO-3. (Microbial infection) Interacts with Clostridium perfringens enterotoxin CPE; the interaction may disrupt claudin assembly in tight junctions. Expressed in the lung. Expressed at high levels in the liver and at lower levels, in kidney and testis.

Its subcellular location is the cell junction. The protein resides in the tight junction. It is found in the cell membrane. Its function is as follows. Plays a major role in tight junction-specific obliteration of the intercellular space, through calcium-independent cell-adhesion activity. This Mus musculus (Mouse) protein is Claudin-3 (Cldn3).